A 1219-amino-acid chain; its full sequence is Protein jagged-1 (1219 aa).

Residues 1-33 (MRSPRTRGRPGRPLSLLLALLCALRAKVCGASG) form the signal peptide. The Extracellular segment spans residues 34-1067 (QFELEILSMQ…QRRPLKNRTD (1034 aa)). A glycan (N-linked (GlcNAc...) asparagine) is linked at N143. In terms of domain architecture, DSL spans 185-229 (VTCDDHYYGFGCNKFCRPRDDFFGHYACDQNGNKTCMEGWMGPEC). 2 disulfide bridges follow: C187–C196 and C200–C212. The tract at residues 199–207 (FCRPRDDFF) is important for interaction with NOTCH1. N217 carries an N-linked (GlcNAc...) asparagine glycan. Cystine bridges form between C220/C229, C234/C245, C238/C251, C253/C262, C265/C276, C271/C282, C284/C293, C300/C312, C306/C322, C324/C333, C340/C351, C345/C360, C362/C371, C378/C389, C383/C398, C400/C409, C416/C427, C421/C436, C438/C447, C454/C464, C458/C473, C475/C484, C491/C502, C496/C511, C513/C522, C529/C540, C534/C549, C551/C560, C578/C605, C599/C615, C617/C626, C633/C644, C638/C653, C655/C664, C671/C682, C676/C691, C693/C702, C709/C720, C714/C729, and C731/C740. The 34-residue stretch at 230–263 (NKAICRQGCSPKHGSCKLPGDCRCQYGWQGLYCD) folds into the EGF-like 1 domain. An EGF-like 2; atypical domain is found at 264–294 (KCIPHPGCVHGTCNEPWQCLCETNWGGQLCD). 2 consecutive EGF-like domains span residues 296–334 (DLNY…PNCE) and 336–372 (AEHA…PTCS). Positions 374-410 (NIDDCSPNNCSHGGTCQDLVNGFKCVCPPQWTGKTCQ) constitute an EGF-like 5; calcium-binding domain. N-linked (GlcNAc...) asparagine glycosylation is present at N382. The region spanning 412-448 (DANECEAKPCVNARSCKNLIASYYCDCLPGWMGQNCD) is the EGF-like 6; calcium-binding domain. The EGF-like 7; calcium-binding domain maps to 450–485 (NINDCLGQCQNDASCRDLVNGYRCICPPGYAGDHCE). An EGF-like 8; calcium-binding domain is found at 487-523 (DIDECASNPCLNGGHCQNEINRFQCLCPTGFSGNLCQ). EGF-like domains are found at residues 525-561 (DIDY…KNCS) and 586-627 (DTPE…TYCH). N559 carries N-linked (GlcNAc...) asparagine glycosylation. Residues 629–665 (NINDCEGNPCTNGGTCIDGVNSYKCICSDGWEGAHCE) form the EGF-like 11; calcium-binding domain. The region spanning 667 to 703 (NINDCSQNPCHYGGTCRDLVNDFYCDCKNGWKGKTCH) is the EGF-like 12; calcium-binding domain. EGF-like domains follow at residues 705–741 (RDSQ…TTCN) and 744–780 (RNSS…PICT). A glycan (N-linked (GlcNAc...) asparagine) is linked at N745. Disulfide bonds link C748-C759, C753-C768, C770-C779, C786-C797, C791-C806, C808-C817, C824-C835, C829-C844, C846-C855, C925-C936, and C948-C958. The 37-residue stretch at 782 to 818 (NTNDCSPHPCYNSGTCVDGDNWYRCECAPGFAGPDCR) folds into the EGF-like 15; calcium-binding domain. An EGF-like 16; calcium-binding domain is found at 820-856 (NINECQSSPCAFGATCVDEINGYQCICPPGHSGAKCH). 4 N-linked (GlcNAc...) asparagine glycosylation sites follow: N960, N991, N1045, and N1064. The helical transmembrane segment at 1068–1093 (FLVPLLSSVLTVAWVCCLVTAFYWCV) threads the bilayer. Topologically, residues 1094 to 1219 (RKRRRKPSSH…QSLNRMEYIV (126 aa)) are cytoplasmic. A disordered region spans residues 1182–1219 (REEKVPQRTPTKHPNWTNKQDNRDLESAQSLNRMEYIV). The span at 1189–1200 (RTPTKHPNWTNK) shows a compositional bias: polar residues.

In terms of assembly, interacts with NOTCH1. Interacts with NOTCH2 and NOTCH3. Widely expressed in a variety of tissues.

The protein localises to the membrane. Its subcellular location is the cell membrane. Functionally, ligand for multiple Notch receptors and involved in the mediation of Notch signaling. May be involved in cell-fate decisions during hematopoiesis. Enhances fibroblast growth factor-induced angiogenesis (in vitro). Seems to be involved in early and late stages of mammalian cardiovascular development. Inhibits myoblast differentiation. May regulate fibroblast growth factor-induced angiogenesis. The chain is Protein jagged-1 (Jag1) from Rattus norvegicus (Rat).